Reading from the N-terminus, the 912-residue chain is Protein translocase subunit SecA (912 aa).

ATP contacts are provided by residues Q86, 104–108 (GEGKT), and D494. The segment at 860–912 (EAPEKPAQLQYTAPGEDGASQTRVEGRSSGRSGNPAKAAQDGARKPAPKKKKR) is disordered.

Belongs to the SecA family. Monomer and homodimer. Part of the essential Sec protein translocation apparatus which comprises SecA, SecYEG and auxiliary proteins SecDF. Other proteins may also be involved.

It localises to the cell membrane. The protein localises to the cytoplasm. The catalysed reaction is ATP + H2O + cellular proteinSide 1 = ADP + phosphate + cellular proteinSide 2.. Functionally, part of the Sec protein translocase complex. Interacts with the SecYEG preprotein conducting channel. Has a central role in coupling the hydrolysis of ATP to the transfer of proteins into and across the cell membrane, serving as an ATP-driven molecular motor driving the stepwise translocation of polypeptide chains across the membrane. This Arthrobacter sp. (strain FB24) protein is Protein translocase subunit SecA.